A 364-amino-acid polypeptide reads, in one-letter code: Apelin receptor (364 aa).

Residues 1-39 (MATDEFSSSTTPSYDYYDYTNESGLPPCDETDWDLSYSL) lie on the Extracellular side of the membrane. N-linked (GlcNAc...) asparagine glycosylation is present at asparagine 21. 2 disulfide bridges follow: cysteine 28-cysteine 288 and cysteine 110-cysteine 187. The helical transmembrane segment at 40-60 (LPVFYMIVFVLGLSGNGVVIF) threads the bilayer. Residues 61–78 (TVWKAKPKRRSADTYIGN) are Cytoplasmic-facing. A helical membrane pass occupies residues 79–99 (LALADLAFVVTLPLWATYTAL). The Extracellular segment spans residues 100–112 (GFHWPFGSALCKL). The helical transmembrane segment at 113 to 133 (SSYLVLLNMFASVFCLTCLSF) threads the bilayer. At 134-153 (DRYLAIVHSLSSAKLRSRSS) the chain is on the cytoplasmic side. A helical transmembrane segment spans residues 154–174 (ILVSLAVIWLFSGLLALPSLI). The Extracellular portion of the chain corresponds to 175 to 201 (LRDTRVEGNNTICDLDFSGVSSKENEN). The N-linked (GlcNAc...) asparagine glycan is linked to asparagine 183. Residues 202-222 (FWIGGLSILTTVPGFLLPLLL) traverse the membrane as a helical segment. Topologically, residues 223 to 250 (MTIFYCFIGGKVTMHFQNLKKEEQKKKR) are cytoplasmic. Residues 251–271 (LLKIIITLVVVFAICWLPFHI) form a helical membrane-spanning segment. Residues 272–298 (LKTIHFLDLMGFLELSCSTQNIIVSLH) are Extracellular-facing. The chain crosses the membrane as a helical span at residues 299–319 (PYATCLAYINSCLNPFLYAFF). Over 320–364 (DLRFRSQCFFFFGFKKALQGHLSNTSSSLSAQTQKSEIHSLATKV) the chain is Cytoplasmic.

The protein belongs to the G-protein coupled receptor 1 family.

The protein localises to the cell membrane. Functionally, g protein-coupled receptor for peptide hormones apelin (apln) and apelin receptor early endogenous ligand (apela), that plays a role in the regulation of normal cardiovascular function and fluid homeostasis. When acting as apelin receptor, activates both G(i) protein pathway that inhibits adenylate cyclase activity, and the beta-arrestin pathway that promotes internalization of the receptor. Also functions as mechanoreceptor that is activated by pathological stimuli in a G-protein-independent fashion to induce beta-arrestin signaling, hence eliciting cardiac hypertrophy. However, the presence of apelin ligand blunts cardiac hypertrophic induction from APLNR/APJ on response to pathological stimuli. Plays a key role in early development such as gastrulation, blood vessels formation and heart morphogenesis by acting as a receptor for apela hormone, promoting endoderm and mesendoderm cell migration and regulating the migration of cells fated to become myocardial progenitors, respectively. Promotes angioblast migration toward the embryonic midline, i.e. the position of the future vessel formation, during vasculogenesis. May promote sinus venosus (SV)-derived endothelial cells migration into the developing heart to promote coronary blood vessel development. Required for cardiovascular development, particularly for intersomitic vein angiogenesis. Plays also a role in various processes in adults such as regulation of blood vessel formation, blood pressure, heart contractility, and heart failure. Acts upstream of the i/o type of G-alpha proteins in the differentiation of endothelium, erythroid cells, myeloid cells and cardiomyocytes. This chain is Apelin receptor (aplnr), found in Xenopus tropicalis (Western clawed frog).